A 179-amino-acid polypeptide reads, in one-letter code: MTDLVAVWDVALSDGVHKIEFEHGTTSGKRVVYVDGKEEIRKEWMFKLVGKETFYVGAAKTKATINIDAISGFAYEYTLEINGKSLKKYMEDRSKTTNTWVLHMDGENFRIVLEKDAMDVWCNGKKLETAGEFVDDGTETHFSIGNHDCYIKAVSSGKRKEGIIHTLIVDNREIPEIAS.

Threonine 2 is subject to N-acetylthreonine.

Belongs to the FAIM1 family.

It is found in the cytoplasm. In terms of biological role, plays a role as an inducible effector molecule that mediates Fas resistance produced by surface Ig engagement in B cells. In Homo sapiens (Human), this protein is Fas apoptotic inhibitory molecule 1 (FAIM).